A 420-amino-acid polypeptide reads, in one-letter code: RING finger protein 39 (420 aa).

Residues 88–135 (CPLCGGSFEDPVLLACEHSFCRACLARRWGTPPATGTEASPTACPCCG) form an RING-type zinc finger. The B30.2/SPRY domain occupies 210–420 (DDLPEDYPVV…APLRIVPAES (211 aa)).

In terms of tissue distribution, expressed in testis.

It is found in the cytoplasm. It catalyses the reaction S-ubiquitinyl-[E2 ubiquitin-conjugating enzyme]-L-cysteine + [acceptor protein]-L-lysine = [E2 ubiquitin-conjugating enzyme]-L-cysteine + N(6)-ubiquitinyl-[acceptor protein]-L-lysine.. The protein operates within protein modification; protein ubiquitination. In terms of biological role, plays an inhibitory role in anti-RNA viral innate immunity by targeting the adapter DDX3X and promoting its 'Lys-48'-linked polyubiquitination. Alternatively, enhances the cGAS-STING pathway activation by promoting 'Lys-63'-linked ubiquitination of STING1, facilitating the STING1-TBK1 complex formation and STING1 activation. (Microbial infection) Plays a positive role in human immunodeficiency virus (HIV-1) replication. This is RING finger protein 39 (RNF39) from Homo sapiens (Human).